The chain runs to 37 residues: QNETNKKCQGGSCASVCRRVIGVAAGKCINGRCVCYP.

The residue at position 1 (Gln1) is a Pyrrolidone carboxylic acid. Disulfide bonds link Cys8–Cys28, Cys13–Cys33, and Cys17–Cys35.

It belongs to the short scorpion toxin superfamily. Potassium channel inhibitor family. Alpha-KTx 15 subfamily. In terms of tissue distribution, expressed by the venom gland.

The protein localises to the secreted. Functionally, blocker of voltage-gated potassium channels (600 nM of the toxin induces a block of 25% of hERG currents). May also inhibit Kv4/KCND when coexpressed with DPP6 or DPP10. In adult rat brain, it blocks the transient potassium channels in cerebellum granular cells. Blocks potassium channels by a simple 'plugging mechanism', in which a single toxin molecule finds a specific receptor site in the external vestibule of the potassium channel and thereby occludes the outer entry to the potassium conducting pore. The protein is Potassium channel toxin alpha-KTx 15.1 of Androctonus australis (Sahara scorpion).